Reading from the N-terminus, the 287-residue chain is Inorganic pyrophosphatase (287 aa).

Residue R79 coordinates diphosphate. Mg(2+) is bound by residues D116, D121, and D153.

It belongs to the PPase family. Mg(2+) is required as a cofactor.

The protein localises to the cytoplasm. The catalysed reaction is diphosphate + H2O = 2 phosphate + H(+). The protein is Inorganic pyrophosphatase (IPP1) of Eremothecium gossypii (strain ATCC 10895 / CBS 109.51 / FGSC 9923 / NRRL Y-1056) (Yeast).